A 350-amino-acid polypeptide reads, in one-letter code: Aldo-keto reductase 1B (350 aa).

The Proton donor role is filled by tyrosine 84. Substrate is bound at residue histidine 146. An NADP(+)-binding site is contributed by 244 to 306 (SPLGSPNRPW…SVTKDRIESN (63 aa)).

This sequence belongs to the aldo/keto reductase family.

The protein resides in the cytoplasm. It carries out the reaction an alditol + NADP(+) = an aldose + NADPH + H(+). The catalysed reaction is all-trans-retinol + NADP(+) = all-trans-retinal + NADPH + H(+). The enzyme catalyses 9-cis-retinol + NADP(+) = 9-cis-retinal + NADPH + H(+). It catalyses the reaction 13-cis-retinol + NADP(+) = 13-cis-retinal + NADPH + H(+). It carries out the reaction glycerol + NADP(+) = D-glyceraldehyde + NADPH + H(+). The catalysed reaction is glycerol + NADP(+) = L-glyceraldehyde + NADPH + H(+). The enzyme catalyses prenol + NADP(+) = 3-methyl-2-butenal + NADPH + H(+). It catalyses the reaction (E)-hex-2-en-1-ol + NADP(+) = (E)-hex-2-enal + NADPH + H(+). It carries out the reaction (E,E)-2,4-hexadien-1-ol + NADP(+) = (E,E)-2,4-hexadienal + NADPH + H(+). The catalysed reaction is a 4-hydroxynonen-1-ol + NADP(+) = a 4-hydroxynonenal + NADPH + H(+). The enzyme catalyses prostaglandin F2alpha + NADP(+) = prostaglandin H2 + NADPH + H(+). It catalyses the reaction allyl alcohol + NADP(+) = acrolein + NADPH + H(+). It carries out the reaction pyridine 3-methanol + NADP(+) = pyridine-3-carbaldehyde + NADPH + H(+). The catalysed reaction is 1-hexadecanoyl-2-(5-oxopentanoyl)-sn-glycero-3-phosphocholine + NADPH + H(+) = 1-hexadecanoyl-2-(5-hydroxypentanoyl)-sn-glycero-3-phosphocholine + NADP(+). The enzyme catalyses 1-hexadecanoyl-2-(7-oxoheptanoyl)-sn-glycero-3-phosphocholine + NADPH + H(+) = 1-hexadecanoyl-2-(7-hydroxyheptanoyl)-sn-glycero-3-phosphocholine + NADP(+). It catalyses the reaction 1-hexadecanoyl-2-(9-oxononanoyl)-sn-glycero-3-phosphocholine + NADPH + H(+) = 1-hexadecanoyl-2-(9-hydroxynonanoyl)-sn-glycero-3-phosphocholine + NADP(+). It carries out the reaction 1-hexadecanoyl-2-(5-oxopentanoyl)-sn-glycero-3-phosphoethanolamine + NADPH + H(+) = 1-hexadecanoyl-2-(5-hydroxypentanoyl)-sn-glycero-3-phosphoethanolamine + NADP(+). In terms of biological role, catalyzes the NADPH-dependent reduction of a wide variety of carbonyl-containing compounds to their corresponding alcohols. Displays enzymatic activity towards endogenous metabolites such as aromatic and aliphatic aldehydes, ketones, monosaccharides, bile acids and xenobiotics substrates. Key enzyme in the polyol pathway, catalyzes reduction of glucose to sorbitol during hyperglycemia. Reduces steroids and their derivatives and prostaglandins. Through production of prostaglandin F2alpha may regulate the activity of non-muscle myosin II in an autocrine or paracrine fashion; influences border cell and nurse cell stiffness to facilitate border cell cluster migration. Also regulates the cell surface localization of integrins in an autocrine or paracrine fashion; influences border cell adhesion to maintain border cell cluster morphology. In hemocytes, probably contributes to production of sugar alcohols in the hemolymph, which act as alarmins involved in gut-fat body innate immunological communication (GFIC); leads to activation of the imd/Relish signaling pathway in the fat body. The polypeptide is Aldo-keto reductase 1B (Drosophila melanogaster (Fruit fly)).